The chain runs to 135 residues: Cytochrome c-type biogenesis protein CcmE (135 aa).

Residues 1-8 lie on the Cytoplasmic side of the membrane; it reads MLLLRWKR. The helical; Signal-anchor for type II membrane protein transmembrane segment at 9–29 threads the bilayer; it reads FWFLSLGILLFSGVVSLMLFN. Over 30-135 the chain is Periplasmic; that stretch reads LSESISFFYL…EDFIKSVRGE (106 aa). Positions 118 and 122 each coordinate heme.

It belongs to the CcmE/CycJ family.

Its subcellular location is the cell inner membrane. Functionally, heme chaperone required for the biogenesis of c-type cytochromes. Transiently binds heme delivered by CcmC and transfers the heme to apo-cytochromes in a process facilitated by CcmF and CcmH. In Neorickettsia sennetsu (strain ATCC VR-367 / Miyayama) (Ehrlichia sennetsu), this protein is Cytochrome c-type biogenesis protein CcmE.